The primary structure comprises 1167 residues: Chromosome partition protein Smc (1167 aa).

Position 32 to 39 (P32 to N39) interacts with ATP. 5 coiled-coil regions span residues I170 to T274, Q310 to D390, G468 to L500, A653 to L870, and E982 to G1011.

This sequence belongs to the SMC family. As to quaternary structure, homodimer.

The protein localises to the cytoplasm. Functionally, required for chromosome condensation and partitioning. The polypeptide is Chromosome partition protein Smc (Xanthomonas oryzae pv. oryzae (strain KACC10331 / KXO85)).